Here is a 55-residue protein sequence, read N- to C-terminus: uncharacterized protein (55 aa).

The interval 1 to 22 (MPALKSHVRPNSAAPARRQPWP) is disordered.

This is an uncharacterized protein from Rhodobacter capsulatus (Rhodopseudomonas capsulata).